Consider the following 447-residue polypeptide: UDP-N-acetylmuramate--L-alanine ligase (447 aa).

Position 108–114 (Gly108–Ser114) interacts with ATP.

Belongs to the MurCDEF family.

The protein resides in the cytoplasm. It carries out the reaction UDP-N-acetyl-alpha-D-muramate + L-alanine + ATP = UDP-N-acetyl-alpha-D-muramoyl-L-alanine + ADP + phosphate + H(+). The protein operates within cell wall biogenesis; peptidoglycan biosynthesis. Cell wall formation. The protein is UDP-N-acetylmuramate--L-alanine ligase of Listeria monocytogenes serotype 4b (strain F2365).